The chain runs to 391 residues: Succinate--CoA ligase [ADP-forming] subunit beta (391 aa).

An ATP-grasp domain is found at 9 to 246 (KHLFTEAGIA…LTQEDETEVR (238 aa)). ATP-binding positions include K46, 53 to 55 (GRG), E99, L102, and E107. Positions 199 and 213 each coordinate Mg(2+). Substrate contacts are provided by residues N266 and 323-325 (GIV).

The protein belongs to the succinate/malate CoA ligase beta subunit family. In terms of assembly, heterotetramer of two alpha and two beta subunits. Mg(2+) is required as a cofactor.

It carries out the reaction succinate + ATP + CoA = succinyl-CoA + ADP + phosphate. It catalyses the reaction GTP + succinate + CoA = succinyl-CoA + GDP + phosphate. It functions in the pathway carbohydrate metabolism; tricarboxylic acid cycle; succinate from succinyl-CoA (ligase route): step 1/1. In terms of biological role, succinyl-CoA synthetase functions in the citric acid cycle (TCA), coupling the hydrolysis of succinyl-CoA to the synthesis of either ATP or GTP and thus represents the only step of substrate-level phosphorylation in the TCA. The beta subunit provides nucleotide specificity of the enzyme and binds the substrate succinate, while the binding sites for coenzyme A and phosphate are found in the alpha subunit. In Halorhodospira halophila (strain DSM 244 / SL1) (Ectothiorhodospira halophila (strain DSM 244 / SL1)), this protein is Succinate--CoA ligase [ADP-forming] subunit beta.